The following is an 863-amino-acid chain: Receptor-like protein 9DC1 (863 aa).

A signal peptide spans Met-1–Ser-21. Residues Ser-22–Gln-812 lie on the Extracellular side of the membrane. The N-cap stretch occupies residues Leu-24–Gln-90. N-linked (GlcNAc...) asparagine glycosylation is found at Asn-71 and Asn-108. An LRR 1; degenerate repeat occupies Val-91–Leu-114. 2 LRR repeats span residues Ser-115 to Glu-138 and Ser-140 to Leu-163. One copy of the LRR 4; degenerate repeat lies at Ser-164–Asn-190. Residues Asn-190, Asn-203, and Asn-211 are each glycosylated (N-linked (GlcNAc...) asparagine). LRR repeat units lie at residues Leu-191 to Ser-213, Ser-214 to Leu-237, Leu-240 to Ser-262, Ala-264 to His-286, Leu-287 to Leu-311, and Thr-312 to Lys-336. An N-linked (GlcNAc...) asparagine glycan is attached at Asn-261. 2 N-linked (GlcNAc...) asparagine glycosylation sites follow: Asn-299 and Asn-310. The LRR 11; degenerate repeat unit spans residues Leu-337 to Phe-357. 15 LRR repeats span residues Asn-358 to Leu-382, Gln-383 to Leu-406, Ser-408 to Ser-428, Lys-429 to Gln-452, Asn-454 to Leu-476, Lys-477 to Arg-500, Glu-502 to Val-524, Gly-525 to Cys-549, Tyr-551 to Tyr-572, Leu-573 to Asn-597, Phe-599 to Asn-623, Leu-667 to Asp-690, Leu-691 to Asn-714, Leu-715 to Leu-739, and Phe-741 to Gly-759. N-linked (GlcNAc...) asparagine glycosylation is found at Asn-378, Asn-396, and Asn-416. Asn-464 carries an N-linked (GlcNAc...) asparagine glycan. A glycan (N-linked (GlcNAc...) asparagine) is linked at Asn-519. Asn-563 is a glycosylation site (N-linked (GlcNAc...) asparagine). 3 N-linked (GlcNAc...) asparagine glycosylation sites follow: Asn-674, Asn-698, and Asn-714. Residues Asn-746 and Asn-767 are each glycosylated (N-linked (GlcNAc...) asparagine). A C-cap/acidic domain region spans residues Lys-760–Gln-812. A helical membrane pass occupies residues Gly-813–Trp-833. At Ser-834 to Tyr-863 the chain is on the cytoplasmic side.

The protein belongs to the RLP family.

Its subcellular location is the cell membrane. Involved in plant defense. Confers resistance to the fungal pathogen C.fulvum through recognition of the AVR9 elicitor protein. This Solanum pimpinellifolium (Currant tomato) protein is Receptor-like protein 9DC1.